Consider the following 325-residue polypeptide: Glycerol-3-phosphate dehydrogenase [NAD(P)+] (325 aa).

3 residues coordinate NADPH: tryptophan 15, arginine 35, and lysine 107. Positions 107, 135, and 137 each coordinate sn-glycerol 3-phosphate. Alanine 139 serves as a coordination point for NADPH. The sn-glycerol 3-phosphate site is built by lysine 190, aspartate 243, serine 253, arginine 254, and asparagine 255. Lysine 190 functions as the Proton acceptor in the catalytic mechanism. Arginine 254 lines the NADPH pocket. 2 residues coordinate NADPH: leucine 272 and glutamate 274.

Belongs to the NAD-dependent glycerol-3-phosphate dehydrogenase family.

The protein localises to the cytoplasm. The catalysed reaction is sn-glycerol 3-phosphate + NAD(+) = dihydroxyacetone phosphate + NADH + H(+). It carries out the reaction sn-glycerol 3-phosphate + NADP(+) = dihydroxyacetone phosphate + NADPH + H(+). The protein operates within membrane lipid metabolism; glycerophospholipid metabolism. In terms of biological role, catalyzes the reduction of the glycolytic intermediate dihydroxyacetone phosphate (DHAP) to sn-glycerol 3-phosphate (G3P), the key precursor for phospholipid synthesis. This is Glycerol-3-phosphate dehydrogenase [NAD(P)+] from Afipia carboxidovorans (strain ATCC 49405 / DSM 1227 / KCTC 32145 / OM5) (Oligotropha carboxidovorans).